Consider the following 901-residue polypeptide: Protein translocase subunit SecA (901 aa).

ATP is bound by residues Gln-87, 105-109 (GEGKT), and Asp-512. Residues 859-901 (HQDDDSAAAAALAAQTGERKVGRNDPCPCGSGKKYKQCHGRLQ) are disordered. Cys-885, Cys-887, Cys-896, and His-897 together coordinate Zn(2+). Positions 891 to 901 (KKYKQCHGRLQ) are enriched in basic residues.

The protein belongs to the SecA family. As to quaternary structure, monomer and homodimer. Part of the essential Sec protein translocation apparatus which comprises SecA, SecYEG and auxiliary proteins SecDF-YajC and YidC. It depends on Zn(2+) as a cofactor.

Its subcellular location is the cell inner membrane. The protein localises to the cytoplasm. The enzyme catalyses ATP + H2O + cellular proteinSide 1 = ADP + phosphate + cellular proteinSide 2.. Its function is as follows. Part of the Sec protein translocase complex. Interacts with the SecYEG preprotein conducting channel. Has a central role in coupling the hydrolysis of ATP to the transfer of proteins into and across the cell membrane, serving both as a receptor for the preprotein-SecB complex and as an ATP-driven molecular motor driving the stepwise translocation of polypeptide chains across the membrane. This chain is Protein translocase subunit SecA, found in Escherichia coli O9:H4 (strain HS).